A 29-amino-acid chain; its full sequence is Cytochrome b6-f complex subunit 8 (29 aa).

The chain crosses the membrane as a helical span at residues 3–23; it reads ILSISWAFLMVVFTFSLSLVV.

It belongs to the PetN family. In terms of assembly, the 4 large subunits of the cytochrome b6-f complex are cytochrome b6, subunit IV (17 kDa polypeptide, PetD), cytochrome f and the Rieske protein, while the 4 small subunits are PetG, PetL, PetM and PetN. The complex functions as a dimer.

The protein resides in the plastid. It localises to the chloroplast thylakoid membrane. Its function is as follows. Component of the cytochrome b6-f complex, which mediates electron transfer between photosystem II (PSII) and photosystem I (PSI), cyclic electron flow around PSI, and state transitions. This chain is Cytochrome b6-f complex subunit 8, found in Chara vulgaris (Common stonewort).